A 211-amino-acid polypeptide reads, in one-letter code: Putative hydrolase SMU_367 (211 aa).

The N-terminal stretch at 1–29 is a signal peptide; that stretch reads MKKQFLEKAVFTVAATAATVVLGNKMADA. One can recognise a LysM domain in the interval 30-74; the sequence is DTYTLQEGDSFFSVAQRYHMDAYELASMNGKDITSLILPGQTLTV. Positions 77–101 are disordered; the sequence is SAAPDNQAAAPTDTTQATTETNDAN. A compositionally biased stretch (low complexity) spans 78-101; it reads AAPDNQAAAPTDTTQATTETNDAN. The Peptidase C51 domain occupies 85 to 209; the sequence is AAPTDTTQAT…GTPGSVSYIY (125 aa).

This chain is Putative hydrolase SMU_367, found in Streptococcus mutans serotype c (strain ATCC 700610 / UA159).